The sequence spans 277 residues: 2,3,4,5-tetrahydropyridine-2,6-dicarboxylate N-succinyltransferase (277 aa).

R106 and D143 together coordinate substrate.

This sequence belongs to the transferase hexapeptide repeat family. In terms of assembly, homotrimer.

The protein localises to the cytoplasm. It catalyses the reaction (S)-2,3,4,5-tetrahydrodipicolinate + succinyl-CoA + H2O = (S)-2-succinylamino-6-oxoheptanedioate + CoA. Its pathway is amino-acid biosynthesis; L-lysine biosynthesis via DAP pathway; LL-2,6-diaminopimelate from (S)-tetrahydrodipicolinate (succinylase route): step 1/3. The polypeptide is 2,3,4,5-tetrahydropyridine-2,6-dicarboxylate N-succinyltransferase (Variovorax paradoxus (strain S110)).